We begin with the raw amino-acid sequence, 346 residues long: 3-keto-steroid reductase ERG27 (346 aa).

Positions 19, 42, and 48 each coordinate NADP(+). Catalysis depends on proton donor residues serine 182 and tyrosine 205. Tyrosine 205, lysine 209, and serine 241 together coordinate NADP(+). Lysine 209 functions as the Lowers pKa of active site Tyr in the catalytic mechanism. Residues phenylalanine 242 to leucine 262 form a helical membrane-spanning segment. N-linked (GlcNAc...) asparagine glycosylation is present at asparagine 272.

Belongs to the short-chain dehydrogenases/reductases (SDR) family. ERG27 subfamily. As to quaternary structure, heterotetramer of ERG25, ERG26, ERG27 and ERG28. ERG28 acts as a scaffold to tether ERG27 and other 4,4-demethylation-related enzymes, forming a demethylation enzyme complex, in the endoplasmic reticulum. Interacts with ERG25 and ERG28. Also interacts with ERG7, but only in lipid particles.

It is found in the endoplasmic reticulum membrane. Its subcellular location is the lipid droplet. The enzyme catalyses 3-dehydro-4alpha-methylzymosterol + NADPH + H(+) = 4alpha-methylzymosterol + NADP(+). It functions in the pathway steroid biosynthesis; zymosterol biosynthesis; zymosterol from lanosterol: step 5/6. In terms of biological role, 3-keto-steroid reductase; part of the third module of ergosterol biosynthesis pathway that includes the late steps of the pathway. ERG27 is a catalytic component of the C-4 demethylation complex that catalyzes the reduction of the keto group on the C-3. The third module or late pathway involves the ergosterol synthesis itself through consecutive reactions that mainly occur in the endoplasmic reticulum (ER) membrane. Firstly, the squalene synthase ERG9 catalyzes the condensation of 2 farnesyl pyrophosphate moieties to form squalene, which is the precursor of all steroids. Squalene synthase is crucial for balancing the incorporation of farnesyl diphosphate (FPP) into sterol and nonsterol isoprene synthesis. Secondly, the squalene epoxidase ERG1 catalyzes the stereospecific oxidation of squalene to (S)-2,3-epoxysqualene, which is considered to be a rate-limiting enzyme in steroid biosynthesis. Then, the lanosterol synthase ERG7 catalyzes the cyclization of (S)-2,3 oxidosqualene to lanosterol, a reaction that forms the sterol core. In the next steps, lanosterol is transformed to zymosterol through a complex process involving various demethylation, reduction and desaturation reactions. The lanosterol 14-alpha-demethylase ERG11 (also known as CYP51) catalyzes C14-demethylation of lanosterol to produce 4,4'-dimethyl cholesta-8,14,24-triene-3-beta-ol, which is critical for ergosterol biosynthesis. The C-14 reductase ERG24 reduces the C14=C15 double bond of 4,4-dimethyl-cholesta-8,14,24-trienol to produce 4,4-dimethyl-cholesta-8,24-dienol. 4,4-dimethyl-cholesta-8,24-dienol is substrate of the C-4 demethylation complex ERG25-ERG26-ERG27 in which ERG25 catalyzes the three-step monooxygenation required for the demethylation of 4,4-dimethyl and 4alpha-methylsterols, ERG26 catalyzes the oxidative decarboxylation that results in a reduction of the 3-beta-hydroxy group at the C-3 carbon to an oxo group, and ERG27 is responsible for the reduction of the keto group on the C-3. ERG28 has a role as a scaffold to help anchor ERG25, ERG26 and ERG27 to the endoplasmic reticulum and ERG29 regulates the activity of the iron-containing C4-methylsterol oxidase ERG25. Then, the sterol 24-C-methyltransferase ERG6 catalyzes the methyl transfer from S-adenosyl-methionine to the C-24 of zymosterol to form fecosterol. The C-8 sterol isomerase ERG2 catalyzes the reaction which results in unsaturation at C-7 in the B ring of sterols and thus converts fecosterol to episterol. The sterol-C5-desaturase ERG3 then catalyzes the introduction of a C-5 double bond in the B ring to produce 5-dehydroepisterol. The C-22 sterol desaturase ERG5 further converts 5-dehydroepisterol into ergosta-5,7,22,24(28)-tetraen-3beta-ol by forming the C-22(23) double bond in the sterol side chain. Finally, ergosta-5,7,22,24(28)-tetraen-3beta-ol is substrate of the C-24(28) sterol reductase ERG4 to produce ergosterol. Facilitates the association of ERG7 with lipid particles preventing its digestion in the endoplasmic reticulum and the lipid particles. This is 3-keto-steroid reductase ERG27 from Candida albicans (Yeast).